A 216-amino-acid chain; its full sequence is LexA repressor (216 aa).

A DNA-binding region (H-T-H motif) is located at residues 29-49 (RAEIAQALGFRSPNAAEDHLK). Catalysis depends on for autocatalytic cleavage activity residues S134 and K171.

Belongs to the peptidase S24 family. In terms of assembly, homodimer.

The enzyme catalyses Hydrolysis of Ala-|-Gly bond in repressor LexA.. Functionally, represses a number of genes involved in the response to DNA damage (SOS response), including recA and lexA. In the presence of single-stranded DNA, RecA interacts with LexA causing an autocatalytic cleavage which disrupts the DNA-binding part of LexA, leading to derepression of the SOS regulon and eventually DNA repair. This Bordetella bronchiseptica (strain ATCC BAA-588 / NCTC 13252 / RB50) (Alcaligenes bronchisepticus) protein is LexA repressor.